A 228-amino-acid chain; its full sequence is Endo-1,4-beta-xylanase A (228 aa).

A signal peptide spans 1 to 27 (MNLRKLRLLFVMCIGLTLILTAVPAHA). The 194-residue stretch at 29–222 (TITNNEMGNH…SSGSANVMTN (194 aa)) folds into the GH11 domain. Catalysis depends on E120, which acts as the Nucleophile. E209 acts as the Proton donor in catalysis.

Belongs to the glycosyl hydrolase 11 (cellulase G) family.

It catalyses the reaction Endohydrolysis of (1-&gt;4)-beta-D-xylosidic linkages in xylans.. It participates in glycan degradation; xylan degradation. The polypeptide is Endo-1,4-beta-xylanase A (xynA) (Bacillus pumilus (Bacillus mesentericus)).